We begin with the raw amino-acid sequence, 352 residues long: Uroporphyrinogen decarboxylase (352 aa).

Substrate is bound by residues 26–30, aspartate 76, tyrosine 153, serine 208, and histidine 323; that span reads RQAGR.

It belongs to the uroporphyrinogen decarboxylase family. In terms of assembly, homodimer.

Its subcellular location is the cytoplasm. It catalyses the reaction uroporphyrinogen III + 4 H(+) = coproporphyrinogen III + 4 CO2. Its pathway is porphyrin-containing compound metabolism; protoporphyrin-IX biosynthesis; coproporphyrinogen-III from 5-aminolevulinate: step 4/4. Its function is as follows. Catalyzes the decarboxylation of four acetate groups of uroporphyrinogen-III to yield coproporphyrinogen-III. The protein is Uroporphyrinogen decarboxylase of Prochlorococcus marinus (strain NATL2A).